Consider the following 256-residue polypeptide: Pimeloyl-[acyl-carrier protein] methyl ester esterase (256 aa).

In terms of domain architecture, AB hydrolase-1 spans 15-242; that stretch reads HLVLLHGWGL…AAHAPFISHP (228 aa). Residues Trp22, 82–83, and 143–147 contribute to the substrate site; these read SL and FLALQ. The Nucleophile role is filled by Ser82. Active-site residues include Asp207 and His235. Residue His235 coordinates substrate.

This sequence belongs to the AB hydrolase superfamily. Carboxylesterase BioH family. As to quaternary structure, monomer.

It localises to the cytoplasm. The enzyme catalyses 6-carboxyhexanoyl-[ACP] methyl ester + H2O = 6-carboxyhexanoyl-[ACP] + methanol + H(+). The protein operates within cofactor biosynthesis; biotin biosynthesis. In terms of biological role, the physiological role of BioH is to remove the methyl group introduced by BioC when the pimeloyl moiety is complete. It allows to synthesize pimeloyl-ACP via the fatty acid synthetic pathway through the hydrolysis of the ester bonds of pimeloyl-ACP esters. The protein is Pimeloyl-[acyl-carrier protein] methyl ester esterase of Escherichia coli O81 (strain ED1a).